Here is a 265-residue protein sequence, read N- to C-terminus: Indole-3-glycerol phosphate synthase (265 aa).

This sequence belongs to the TrpC family.

It catalyses the reaction 1-(2-carboxyphenylamino)-1-deoxy-D-ribulose 5-phosphate + H(+) = (1S,2R)-1-C-(indol-3-yl)glycerol 3-phosphate + CO2 + H2O. It participates in amino-acid biosynthesis; L-tryptophan biosynthesis; L-tryptophan from chorismate: step 4/5. This Xanthomonas euvesicatoria pv. vesicatoria (strain 85-10) (Xanthomonas campestris pv. vesicatoria) protein is Indole-3-glycerol phosphate synthase.